The sequence spans 181 residues: CDP-archaeol synthase (181 aa).

5 helical membrane-spanning segments follow: residues 7 to 27, 55 to 75, 88 to 108, 126 to 146, and 147 to 167; these read VVWA…AVLA, LIGT…TPSV, LRAG…ASFL, LDFV…WFTE, and TFTL…HVVT.

The protein belongs to the CDP-archaeol synthase family. Requires Mg(2+) as cofactor.

Its subcellular location is the cell membrane. The catalysed reaction is 2,3-bis-O-(geranylgeranyl)-sn-glycerol 1-phosphate + CTP + H(+) = CDP-2,3-bis-O-(geranylgeranyl)-sn-glycerol + diphosphate. It functions in the pathway membrane lipid metabolism; glycerophospholipid metabolism. Catalyzes the formation of CDP-2,3-bis-(O-geranylgeranyl)-sn-glycerol (CDP-archaeol) from 2,3-bis-(O-geranylgeranyl)-sn-glycerol 1-phosphate (DGGGP) and CTP. This reaction is the third ether-bond-formation step in the biosynthesis of archaeal membrane lipids. This chain is CDP-archaeol synthase, found in Haloarcula marismortui (strain ATCC 43049 / DSM 3752 / JCM 8966 / VKM B-1809) (Halobacterium marismortui).